A 708-amino-acid chain; its full sequence is Metal-pseudopaline receptor CntO (708 aa).

The first 21 residues, 1 to 21 (MRVSVSLVLGVGLGCSSPALW), serve as a signal peptide directing secretion. One can recognise a TBDR plug domain in the interval 63 to 169 (RIEDIPQAIS…PGGTVNLVTK (107 aa)). A TBDR beta-barrel domain is found at 174–708 (ERFARLHASA…NLTMSLTLNY (535 aa)).

This sequence belongs to the TonB-dependent receptor family.

It localises to the cell outer membrane. Functionally, transports the metallophore pseudopaline, which is involved in the acquisition of nickel and zinc, and thus enables bacterial growth inside the host, where metal access is limited. Is probably involved in the import of pseudopaline-metal complexes. The polypeptide is Metal-pseudopaline receptor CntO (Pseudomonas aeruginosa (strain UCBPP-PA14)).